A 340-amino-acid polypeptide reads, in one-letter code: Extracellular matrix protein-binding protein emp (340 aa).

The N-terminal stretch at 1 to 26 (MKKKLLVLTMSTLFATQLINSNHANA) is a signal peptide.

It is found in the cell surface. Functionally, adhesin that binds to the host cell extracellular matrix proteins fibronectin, fibrinogen, collagen, and vitronectin. The protein is Extracellular matrix protein-binding protein emp (emp) of Staphylococcus aureus.